The following is a 254-amino-acid chain: MKFEAIAVEKIPLIRKGDDLPYIICERIELQDRDIIVIASTIVAKAEGETFRLEDITPGEEALAIASRTGKDARFIQAVLSRSREVFVEAPFMLVTTLAGHTCVNAGVDESNIEHGFLLYPPKNPDSSASKLGERLESISGKKLSVIITDTNGRAFKIGQTGVAIGIYKIKPIKRWIGEKDLFDKVLEITEEAVADELAGAANLLMGEGAGGIPVAVIRGLDYYCEEEISMSENYRPEDMDVIKKGLRCLQKKN.

GTP is bound by residues 11–14, 40–41, and Lys-45; these read IPLI and ST. Asp-109 lines the a divalent metal cation pocket. Asn-112 contributes to the GTP binding site. A divalent metal cation contacts are provided by Asp-150, Thr-151, and Glu-208. Residue 206-213 participates in GTP binding; sequence MGEGAGGI.

The protein belongs to the CofE family. As to quaternary structure, homodimer. It depends on Mg(2+) as a cofactor. Requires Mn(2+) as cofactor. K(+) serves as cofactor.

The catalysed reaction is oxidized coenzyme F420-0 + GTP + L-glutamate = oxidized coenzyme F420-1 + GDP + phosphate + H(+). The enzyme catalyses oxidized coenzyme F420-1 + GTP + L-glutamate = oxidized coenzyme F420-2 + GDP + phosphate + H(+). It participates in cofactor biosynthesis; coenzyme F420 biosynthesis. In terms of biological role, catalyzes the GTP-dependent successive addition of two or more gamma-linked L-glutamates to the L-lactyl phosphodiester of 7,8-didemethyl-8-hydroxy-5-deazariboflavin (F420-0) to form coenzyme F420-0-glutamyl-glutamate (F420-2) or polyglutamated F420 derivatives. The chain is Coenzyme F420:L-glutamate ligase from Methanosarcina acetivorans (strain ATCC 35395 / DSM 2834 / JCM 12185 / C2A).